The sequence spans 446 residues: Ribosomal protein uS12 methylthiotransferase RimO (446 aa).

Residues 7–118 (PKIAFAHLGC…IVEVIERVER (112 aa)) enclose the MTTase N-terminal domain. The [4Fe-4S] cluster site is built by cysteine 16, cysteine 52, cysteine 81, cysteine 156, cysteine 160, and cysteine 163. Residues 142–371 (TTPAPVAYLR…MELQQPIAQR (230 aa)) form the Radical SAM core domain. Residues 374–440 (AAEVGKIVPV…IYDLYGIIPA (67 aa)) form the TRAM domain.

Belongs to the methylthiotransferase family. RimO subfamily. [4Fe-4S] cluster is required as a cofactor.

It localises to the cytoplasm. The enzyme catalyses L-aspartate(89)-[ribosomal protein uS12]-hydrogen + (sulfur carrier)-SH + AH2 + 2 S-adenosyl-L-methionine = 3-methylsulfanyl-L-aspartate(89)-[ribosomal protein uS12]-hydrogen + (sulfur carrier)-H + 5'-deoxyadenosine + L-methionine + A + S-adenosyl-L-homocysteine + 2 H(+). Its function is as follows. Catalyzes the methylthiolation of an aspartic acid residue of ribosomal protein uS12. In Thermosynechococcus vestitus (strain NIES-2133 / IAM M-273 / BP-1), this protein is Ribosomal protein uS12 methylthiotransferase RimO.